A 200-amino-acid polypeptide reads, in one-letter code: LexA repressor (200 aa).

The segment at residues 27 to 47 (VREICNAVELRSTSTVHGHLK) is a DNA-binding region (H-T-H motif). Active-site for autocatalytic cleavage activity residues include Ser-124 and Lys-161.

It belongs to the peptidase S24 family. Homodimer.

It carries out the reaction Hydrolysis of Ala-|-Gly bond in repressor LexA.. Represses a number of genes involved in the response to DNA damage (SOS response), including recA and lexA. In the presence of single-stranded DNA, RecA interacts with LexA causing an autocatalytic cleavage which disrupts the DNA-binding part of LexA, leading to derepression of the SOS regulon and eventually DNA repair. This Clostridium tetani (strain Massachusetts / E88) protein is LexA repressor.